We begin with the raw amino-acid sequence, 168 residues long: Crossover junction endodeoxyribonuclease RuvC (168 aa).

Active-site residues include aspartate 8, glutamate 68, and aspartate 140. Positions 8, 68, and 140 each coordinate Mg(2+).

This sequence belongs to the RuvC family. As to quaternary structure, homodimer which binds Holliday junction (HJ) DNA. The HJ becomes 2-fold symmetrical on binding to RuvC with unstacked arms; it has a different conformation from HJ DNA in complex with RuvA. In the full resolvosome a probable DNA-RuvA(4)-RuvB(12)-RuvC(2) complex forms which resolves the HJ. It depends on Mg(2+) as a cofactor.

It is found in the cytoplasm. The catalysed reaction is Endonucleolytic cleavage at a junction such as a reciprocal single-stranded crossover between two homologous DNA duplexes (Holliday junction).. In terms of biological role, the RuvA-RuvB-RuvC complex processes Holliday junction (HJ) DNA during genetic recombination and DNA repair. Endonuclease that resolves HJ intermediates. Cleaves cruciform DNA by making single-stranded nicks across the HJ at symmetrical positions within the homologous arms, yielding a 5'-phosphate and a 3'-hydroxyl group; requires a central core of homology in the junction. The consensus cleavage sequence is 5'-(A/T)TT(C/G)-3'. Cleavage occurs on the 3'-side of the TT dinucleotide at the point of strand exchange. HJ branch migration catalyzed by RuvA-RuvB allows RuvC to scan DNA until it finds its consensus sequence, where it cleaves and resolves the cruciform DNA. The sequence is that of Crossover junction endodeoxyribonuclease RuvC from Lawsonia intracellularis (strain PHE/MN1-00).